The primary structure comprises 158 residues: GTP-dependent dephospho-CoA kinase (158 aa).

D35, V36, D54, K56, E109, and D132 together coordinate GTP.

The protein belongs to the GTP-dependent DPCK family.

The catalysed reaction is 3'-dephospho-CoA + GTP = GDP + CoA + H(+). The protein operates within cofactor biosynthesis; coenzyme A biosynthesis. Catalyzes the GTP-dependent phosphorylation of the 3'-hydroxyl group of dephosphocoenzyme A to form coenzyme A (CoA). The sequence is that of GTP-dependent dephospho-CoA kinase from Methanococcus maripaludis (strain C7 / ATCC BAA-1331).